The primary structure comprises 229 residues: Triosephosphate isomerase (229 aa).

6–8 (NLK) contacts substrate. Residue histidine 85 is the Electrophile of the active site. The active-site Proton acceptor is glutamate 152. The substrate site is built by glycine 158 and serine 188.

It belongs to the triosephosphate isomerase family. In terms of assembly, homodimer.

The protein localises to the cytoplasm. The enzyme catalyses D-glyceraldehyde 3-phosphate = dihydroxyacetone phosphate. It participates in carbohydrate biosynthesis; gluconeogenesis. The protein operates within carbohydrate degradation; glycolysis; D-glyceraldehyde 3-phosphate from glycerone phosphate: step 1/1. Its function is as follows. Involved in the gluconeogenesis. Catalyzes stereospecifically the conversion of dihydroxyacetone phosphate (DHAP) to D-glyceraldehyde-3-phosphate (G3P). The chain is Triosephosphate isomerase from Campylobacter curvus (strain 525.92).